A 299-amino-acid chain; its full sequence is MERQLDAYCEHLRSERQVSPHTLSAYRRDLEKVLGWCQKQNIGSWAALDIQRLRSLIARLHQQGQSSRSLARLLSAVRGLYHYLNREGLCDHDPATGLAPPKGERRLPKTLDTDRALQLLEGAVEDDFLARRDQAILELFYSSGLRLSELTGLNLDQLDLADGMVQVLGKGSKTRLLPVGRKAREALEQWLPLRALTNPADDAVFVSQQGRRLGPRAIQLRVKAAGERELGQNLHPHMLRHSFASHLLESSQDLRAVQELLGHSDIKTTQIYTHLDFQHLATVYDSAHPRAKRIKGDES.

The 85-residue stretch at M1–N85 folds into the Core-binding (CB) domain. Residues R106–D285 enclose the Tyr recombinase domain. Residues R146, K170, H237, R240, and H263 contribute to the active site. The O-(3'-phospho-DNA)-tyrosine intermediate role is filled by Y272.

It belongs to the 'phage' integrase family. XerC subfamily. As to quaternary structure, forms a cyclic heterotetrameric complex composed of two molecules of XerC and two molecules of XerD.

The protein localises to the cytoplasm. Site-specific tyrosine recombinase, which acts by catalyzing the cutting and rejoining of the recombining DNA molecules. The XerC-XerD complex is essential to convert dimers of the bacterial chromosome into monomers to permit their segregation at cell division. It also contributes to the segregational stability of plasmids. The polypeptide is Tyrosine recombinase XerC (Pseudomonas fluorescens).